Reading from the N-terminus, the 429-residue chain is Histidine--tRNA ligase (429 aa).

It belongs to the class-II aminoacyl-tRNA synthetase family. In terms of assembly, homodimer.

Its subcellular location is the cytoplasm. The enzyme catalyses tRNA(His) + L-histidine + ATP = L-histidyl-tRNA(His) + AMP + diphosphate + H(+). The sequence is that of Histidine--tRNA ligase from Pelodictyon phaeoclathratiforme (strain DSM 5477 / BU-1).